The following is a 77-amino-acid chain: Acyl carrier protein (77 aa).

The Carrier domain occupies 2–77 (STVEERVKKI…DAIDYIVAHT (76 aa)). Residue serine 37 is modified to O-(pantetheine 4'-phosphoryl)serine.

This sequence belongs to the acyl carrier protein (ACP) family. In terms of processing, 4'-phosphopantetheine is transferred from CoA to a specific serine of apo-ACP by AcpS. This modification is essential for activity because fatty acids are bound in thioester linkage to the sulfhydryl of the prosthetic group.

It localises to the cytoplasm. The protein operates within lipid metabolism; fatty acid biosynthesis. Its function is as follows. Carrier of the growing fatty acid chain in fatty acid biosynthesis. This chain is Acyl carrier protein, found in Marinobacter nauticus (strain ATCC 700491 / DSM 11845 / VT8) (Marinobacter aquaeolei).